Consider the following 78-residue polypeptide: Large ribosomal subunit protein bL28 (78 aa).

It belongs to the bacterial ribosomal protein bL28 family.

The polypeptide is Large ribosomal subunit protein bL28 (Microcystis aeruginosa (strain NIES-843 / IAM M-2473)).